We begin with the raw amino-acid sequence, 444 residues long: Amino-acid acetyltransferase (444 aa).

The 140-residue stretch at 295–434 folds into the N-acetyltransferase domain; that stretch reads EKVRRANIND…QALYNYQRRS (140 aa).

It belongs to the acetyltransferase family. ArgA subfamily. As to quaternary structure, homohexamer.

The protein localises to the cytoplasm. It catalyses the reaction L-glutamate + acetyl-CoA = N-acetyl-L-glutamate + CoA + H(+). It functions in the pathway amino-acid biosynthesis; L-arginine biosynthesis; N(2)-acetyl-L-ornithine from L-glutamate: step 1/4. This chain is Amino-acid acetyltransferase, found in Proteus mirabilis (strain HI4320).